Consider the following 84-residue polypeptide: UPF0297 protein NT01CX_2279 (84 aa).

The protein belongs to the UPF0297 family.

The polypeptide is UPF0297 protein NT01CX_2279 (Clostridium novyi (strain NT)).